The chain runs to 478 residues: 3-ketoacyl-CoA synthase 3 (478 aa).

An N-terminal signal peptide occupies residues 1–25 (MDLLVMLLSLLVSYLIFKIWKRIDS). The FAE domain occupies 26–313 (KRDQNCYILD…FMLCLLLKKL (288 aa)). Active-site residues include C168, H247, H345, H349, H378, and N382.

It belongs to the thiolase-like superfamily. Chalcone/stilbene synthases family. As to expression, expressed in siliques, leaves, stems and seedlings.

It localises to the endoplasmic reticulum. It catalyses the reaction a very-long-chain acyl-CoA + malonyl-CoA + H(+) = a very-long-chain 3-oxoacyl-CoA + CO2 + CoA. It participates in lipid metabolism; fatty acid biosynthesis. The polypeptide is 3-ketoacyl-CoA synthase 3 (Arabidopsis thaliana (Mouse-ear cress)).